Consider the following 433-residue polypeptide: Serine--tRNA ligase (433 aa).

235–237 (TSE) serves as a coordination point for L-serine. 266 to 268 (RSE) provides a ligand contact to ATP. Glu-289 provides a ligand contact to L-serine. Residue 353-356 (EISS) coordinates ATP. Position 388 (Ser-388) interacts with L-serine.

It belongs to the class-II aminoacyl-tRNA synthetase family. Type-1 seryl-tRNA synthetase subfamily. In terms of assembly, homodimer. The tRNA molecule binds across the dimer.

The protein localises to the cytoplasm. The catalysed reaction is tRNA(Ser) + L-serine + ATP = L-seryl-tRNA(Ser) + AMP + diphosphate + H(+). It carries out the reaction tRNA(Sec) + L-serine + ATP = L-seryl-tRNA(Sec) + AMP + diphosphate + H(+). It functions in the pathway aminoacyl-tRNA biosynthesis; selenocysteinyl-tRNA(Sec) biosynthesis; L-seryl-tRNA(Sec) from L-serine and tRNA(Sec): step 1/1. Functionally, catalyzes the attachment of serine to tRNA(Ser). Is also able to aminoacylate tRNA(Sec) with serine, to form the misacylated tRNA L-seryl-tRNA(Sec), which will be further converted into selenocysteinyl-tRNA(Sec). The protein is Serine--tRNA ligase of Burkholderia thailandensis (strain ATCC 700388 / DSM 13276 / CCUG 48851 / CIP 106301 / E264).